Reading from the N-terminus, the 247-residue chain is HTH-type transcriptional regulator SarU (247 aa).

2 DNA-binding regions (H-T-H motif) span residues 53 to 76 (LKEI…SLSK) and 178 to 201 (LKDL…RLNN).

Belongs to the SarA family.

It is found in the cytoplasm. In terms of biological role, positive regulator of RNAII and RNAIII in a cell density-dependent manner. It can contribute to the expression of virulence genes controlled by agr. May also regulate target genes via an agr-independent pathway. The protein is HTH-type transcriptional regulator SarU (sarU) of Staphylococcus aureus (strain COL).